Reading from the N-terminus, the 503-residue chain is Maturase K (503 aa).

This sequence belongs to the intron maturase 2 family. MatK subfamily.

Its subcellular location is the plastid. It localises to the chloroplast. Usually encoded in the trnK tRNA gene intron. Probably assists in splicing its own and other chloroplast group II introns. The sequence is that of Maturase K from Kunzea pulchella (Red kunzea).